Here is a 142-residue protein sequence, read N- to C-terminus: Prefoldin subunit alpha (142 aa).

This sequence belongs to the prefoldin subunit alpha family. Heterohexamer of two alpha and four beta subunits.

It localises to the cytoplasm. Functionally, molecular chaperone capable of stabilizing a range of proteins. Seems to fulfill an ATP-independent, HSP70-like function in archaeal de novo protein folding. This is Prefoldin subunit alpha from Methanosarcina acetivorans (strain ATCC 35395 / DSM 2834 / JCM 12185 / C2A).